Consider the following 508-residue polypeptide: Erythropoietin receptor (508 aa).

A signal peptide spans 1-24; it reads MNHLWTHLWPGVGSLCLLLAGAAW. Residues 25-250 are Extracellular-facing; it reads ASLPKPLDPK…SLLTASDLDP (226 aa). The cysteines at positions 52 and 62 are disulfide-linked. A glycan (N-linked (GlcNAc...) asparagine) is linked at Asn-76. Cys-91 and Cys-107 are joined by a disulfide. Residues 148-247 enclose the Fibronectin type-III domain; that stretch reads PPAGLLARRA…EPASLLTASD (100 aa). N-linked (GlcNAc...) asparagine glycosylation is present at Asn-184. A WSXWS motif motif is present at residues 233 to 237; it reads WSAWS. Residues 251–273 traverse the membrane as a helical segment; sequence LILTLSLILVLILLLLAVLALLS. The Cytoplasmic segment spans residues 274–508; sequence HRRTLKQKIW…PSPPGYVACS (235 aa). Residue Lys-281 forms a Glycyl lysine isopeptide (Lys-Gly) (interchain with G-Cter in ubiquitin) linkage. A Box 1 motif motif is present at residues 282-290; it reads IWPGIPSPE. Phosphotyrosine; by JAK2 occurs at positions 368 and 426. The ITIM motif signature appears at 452–457; that stretch reads IKYLYL. Lys-453 is covalently cross-linked (Glycyl lysine isopeptide (Lys-Gly) (interchain with G-Cter in ubiquitin)). Phosphotyrosine; by JAK2 is present on residues Tyr-454, Tyr-456, Tyr-468, Tyr-489, and Tyr-504. The tract at residues 467–508 is disordered; the sequence is DYSSGGSQGAQGDSLNSPFLNPYENSLIPAPEPSPPGYVACS.

Belongs to the type I cytokine receptor family. Type 1 subfamily. As to quaternary structure, forms homodimers on EPO stimulation. The tyrosine-phosphorylated form interacts with several SH2 domain-containing proteins including LYN, the adapter protein SH2B2, PTPN6, PTPN11, JAK2, PI3 kinases, STAT5A/B, SOCS3, CRKL. Interacts with INPP5D/SHIP1. SH2B2 binding inhibits the JAK-STAT signaling. Interacts with RHEX; this interaction occurs in a erythropoietin (EPO)-dependent manner. Interacts with ATXN2L. On EPO stimulation, phosphorylated on C-terminal tyrosine residues by JAK2. The phosphotyrosine motifs are also recruitment sites for several SH2-containing proteins and adapter proteins which mediate cell proliferation. Phosphorylation on Tyr-454 is required for PTPN6 interaction, Tyr-426 for PTPN11. Tyr-426 is also required for SOCS3 binding, but Tyr-454/Tyr-456 motif is the preferred binding site. Post-translationally, ubiquitinated by the ECS(SOCS2) complex following ligand-binding and phosphorylation by JAK2, leading to its degradation by the proteasome. Regulation by the ECS(SOCS2) complex acts as a negative feedback loop of erythropoietin-mediated signaling pathway. Ubiquitination at Lys-281 mediates receptor internalization, whereas ubiquitination at Lys-453 promotes trafficking of activated receptors to the lysosomes for degradation. Ubiquitinated by NOSIP; appears to be either multi-monoubiquitinated or polyubiquitinated. Ubiquitination mediates proliferation and survival of EPO-dependent cells.

Its subcellular location is the cell membrane. Functionally, receptor for erythropoietin, which mediates erythropoietin-induced erythroblast proliferation and differentiation. Upon EPO stimulation, EPOR dimerizes triggering the JAK2/STAT5 signaling cascade. In some cell types, can also activate STAT1 and STAT3. May also activate the LYN tyrosine kinase. Isoform EPOR-T acts as a dominant-negative receptor of EPOR-mediated signaling. This is Erythropoietin receptor (EPOR) from Canis lupus familiaris (Dog).